Reading from the N-terminus, the 306-residue chain is Follistatin-related protein 1 (306 aa).

The signal sequence occupies residues 1 to 18; sequence MWKRWLALSLVTIALVHG. Residues 28 to 51 enclose the Follistatin-like domain; that stretch reads ICANVFCGAGRECAVTEKGEPTCL. Intrachain disulfides connect Cys-29–Cys-40, Cys-34–Cys-50, Cys-52–Cys-82, Cys-56–Cys-75, and Cys-64–Cys-96. A Kazal-like domain is found at 46-98; that stretch reads GEPTCLCIEQCKPHKRPVCGSNGKTYLNHCELHRDACLTGSKIQVDYDGHCKE. Residue Asn-142 is glycosylated (N-linked (GlcNAc...) asparagine). Residues 142–176 enclose the EF-hand 1 domain; it reads NYSEILDKYFKSFDNGDSHLDSSEFLKFVEQNETA. Ser-163 is subject to Phosphoserine. N-linked (GlcNAc...) asparagine glycans are attached at residues Asn-173 and Asn-178. The EF-hand 2 domain occupies 191–226; it reads LRSLCVDALIELSDENADWKLSFQEFLKCLNPSFNP. A VWFC domain is found at 231–285; it reads CALEDETYADGAETEVDCNRCVCSCGHWVCTAMTCDGKNQKGVQTHTEEEKTGYV.

As to quaternary structure, homodimer. Interacts with SCN10A. Interacts with DIP2A; DIP2A may act as a cell surface receptor for FSTL1. Interacts with BMP4. Interacts with CD14; this interaction promotes TL4-mediated signaling cascade. During central nervous system development, strongly expressed in the telencephalon, diencephalon, brainstem, limbic system and spinal cord. Widely expressed in all organs.

It localises to the secreted. Functionally, secreted glycoprotein that is involved in various physiological processes, such as angiogenesis, regulation of the immune response, cell proliferation and differentiation. Plays a role in the development of the central nervous system, skeletal system, lungs, and ureter. Promotes endothelial cell survival, migration and differentiation into network structures in an AKT-dependent manner. Also promotes survival of cardiac myocytes. Initiates various signaling cascades by activating different receptors on the cell surface such as DIP2A, TLR4 or BMP receptors. In Mus musculus (Mouse), this protein is Follistatin-related protein 1 (Fstl1).